The sequence spans 236 residues: 5'-methylthioadenosine/S-adenosylhomocysteine nucleosidase (236 aa).

The active-site Proton acceptor is Glu12. Residues Gly78, Ile153, and 174 to 175 (ME) contribute to the substrate site. The active-site Proton donor is the Asp198.

The protein belongs to the PNP/UDP phosphorylase family. MtnN subfamily.

It catalyses the reaction S-adenosyl-L-homocysteine + H2O = S-(5-deoxy-D-ribos-5-yl)-L-homocysteine + adenine. It carries out the reaction S-methyl-5'-thioadenosine + H2O = 5-(methylsulfanyl)-D-ribose + adenine. The catalysed reaction is 5'-deoxyadenosine + H2O = 5-deoxy-D-ribose + adenine. Its pathway is amino-acid biosynthesis; L-methionine biosynthesis via salvage pathway; S-methyl-5-thio-alpha-D-ribose 1-phosphate from S-methyl-5'-thioadenosine (hydrolase route): step 1/2. Catalyzes the irreversible cleavage of the glycosidic bond in both 5'-methylthioadenosine (MTA) and S-adenosylhomocysteine (SAH/AdoHcy) to adenine and the corresponding thioribose, 5'-methylthioribose and S-ribosylhomocysteine, respectively. Also cleaves 5'-deoxyadenosine, a toxic by-product of radical S-adenosylmethionine (SAM) enzymes, into 5-deoxyribose and adenine. The protein is 5'-methylthioadenosine/S-adenosylhomocysteine nucleosidase of Shewanella oneidensis (strain ATCC 700550 / JCM 31522 / CIP 106686 / LMG 19005 / NCIMB 14063 / MR-1).